The following is a 211-amino-acid chain: MMDTFSCNSYEQNHPHDDDIDIDAHDHDSHGGDHQEESGWTTYLDDFSNQYRTTHHEENDHQDKSSYSLLATSTSLVSDAATHAFSGKSFPVNFPAKLKFGRGRTKKICEDDSLEDTASSPVNSPKVSHFEHIQTPPRKIEDYVSSSFVMGNIRGMGDHQIQIQEGGEQKVTLMRNLIDGNNNNNNNNMDLRSRGLCVVPISMLANFNGRC.

Residues 1–12 (MMDTFSCNSYEQ) are compositionally biased toward polar residues. The tract at residues 1–40 (MMDTFSCNSYEQNHPHDDDIDIDAHDHDSHGGDHQEESGW) is disordered. Positions 13 to 37 (NHPHDDDIDIDAHDHDSHGGDHQEE) are enriched in basic and acidic residues.

In terms of tissue distribution, expressed in vascular tissues of cotyledons, rosette leaves, sepals, petals, anther filaments. Expressed in roots, inflorescence stems and developing seeds.

It localises to the cytoplasm. The protein localises to the nucleus. Its function is as follows. Involved in the regulation of xylem development and growth. May regulate secondary wall formation during vascular development by modulation of brassinosteroid, gibberellin and auxin hormone signaling pathways. The sequence is that of Vascular-related unknown protein 1 from Arabidopsis thaliana (Mouse-ear cress).